The sequence spans 569 residues: MVICCAAVNCSNRQGKGEKRAVSFHRFPLKDSKRLIQWLKAVQRDNWTPTKYSFLCSEHFTKDSFSKRLEDQHRLLKPTAVPSIFHLSEKKRGAGGHGPARRKTTGAMRGHTSAATGKGTIGSSLSSSDNLMAKPESRKLKRASPQDDTAPKATPGAVSQEPGQSLERTPGDQAAPLARGQEEAQVSATEADHQKASSSAADAGGADKSGISMDDFTPPGSGACKFIGSLHSYSFSSKHTRERPSVPREPMDRKRLKRDIEPRCSGNSVAQSPPSSSLTATPQKASQSPSAPPTDVTPKPAAEAVQSEHSDANPMSINEVILSASGACKLIDSLHSYCFSARQNKSQVCCLREQVEKKNGELKSLRQRVSRSDSQVRKLREKLDELRRASLPYLPYLSGLLPPSHEPPKLNPVVEPLSWMLGTWLSEPPGVGTFPTLQPFQYLEEVHISHVGQPMLNFSFNSFHPETHKPMHRECGFIRLKPDTNKVAFVSAQNTGVVEVEEGEVNGQELCVSSHSISRISFAKEPHVQQITRKFRLNSEGKLEQTVSMATTTQPMTQHLHITYKKVTP.

The THAP-type zinc-finger motif lies at 1 to 85; sequence MVICCAAVNC…LKPTAVPSIF (85 aa). Residues 83 to 219 are disordered; the sequence is SIFHLSEKKR…GISMDDFTPP (137 aa). Positions 121–130 are enriched in polar residues; that stretch reads IGSSLSSSDN. Phosphoserine is present on serine 159. Over residues 196–210 the composition is skewed to low complexity; sequence ASSSAADAGGADKSG. The HCFC1-binding motif (HBM) signature appears at 230–233; it reads LHSY. Serine 234 is modified (phosphoserine). The disordered stretch occupies residues 235–312; it reads FSSKHTRERP…EAVQSEHSDA (78 aa). A compositionally biased stretch (basic and acidic residues) spans 242–262; sequence ERPSVPREPMDRKRLKRDIEP. Over residues 265 to 279 the composition is skewed to polar residues; that stretch reads SGNSVAQSPPSSSLT. Low complexity predominate over residues 280–289; it reads ATPQKASQSP. A nitrobindin region spans residues 407–569; sequence PPKLNPVVEP…LHITYKKVTP (163 aa). Residues threonine 436 and histidine 559 each contribute to the heme b site.

It in the C-terminal section; belongs to the nitrobindin family. In terms of assembly, homodimer. The cofactor is heme b.

It is found in the cytoplasm. The protein resides in the nucleus. The enzyme catalyses peroxynitrite = nitrate. Its pathway is nitrogen metabolism. Its function is as follows. Heme-binding protein able to scavenge peroxynitrite and to protect free L-tyrosine against peroxynitrite-mediated nitration, by acting as a peroxynitrite isomerase that converts peroxynitrite to nitrate. Therefore, this protein likely plays a role in peroxynitrite sensing and in the detoxification of reactive nitrogen and oxygen species (RNS and ROS, respectively). Is able to bind nitric oxide (NO) in vitro, but may act as a sensor of peroxynitrite levels in vivo, possibly modulating the transcriptional activity residing in the N-terminal region. This chain is Peroxynitrite isomerase THAP4, found in Rattus norvegicus (Rat).